The chain runs to 589 residues: MSVSVHETRKSRSSTGSMNISVFHKASHPDCVLAHLNTLRKHCMFTDVTLWAGDRAFPCHRAVLAASSRYFEAMFSHGLRESRDDTVNFQDNLHPEVLELLLDFAYSSRIVINEENAESLLEAGDMLQFHDVRDAAAEFLEKNLSPSNCLGMMVLSDAHQCRRLYEFSCRMSLVHFETVRQSEDFNSLSRDTLLDLISRDELETEDERVVFEAILQWVKHDLEQRKAHLPLLLRNVRLALLPSDCLKNAVSGEALLMADECTKLILDEAFRCKTKILLNDGVVTSPFARPRKAGHTLLILGGQTFMCDKIYQVDHKAKEIIPKADLPSPRKEFSASAIGCKVYVTGGRGSENGVSKDVWVYDTVHEEWSKAAPMLIARFGHGSAELENCLYVVGGHTSLAGIFPASPSVSLKQVEKYDPGDNKWTMVAPMRDGVSNAAVVSAKLKLFVFGGTSIHRDMVSKVQCFDPSENRWTIKAECPQPWRYTAAAVLGSQIFIMGGDTEYTAASAYRFDCETNQWTRIGDMTAKRMSCHAVASGNKLYVVGGYFGTQRCKTLDCYDPTSDTWNCITTVPYSLIPTAFVSTWKHLPA.

The BTB domain maps to 46-114 (TDVTLWAGDR…AYSSRIVINE (69 aa)). In terms of domain architecture, BACK spans 149-250 (CLGMMVLSDA…LPSDCLKNAV (102 aa)). Kelch repeat units lie at residues 296–340 (TLLI…AIGC), 341–388 (KVYV…ELEN), 389–444 (CLYV…SAKL), 446–492 (LFVF…VLGS), 493–538 (QIFI…ASGN), and 539–585 (KLYV…STWK).

Component of the BCR(KLHL25) E3 ubiquitin ligase complex, at least composed of CUL3, KLHL25 and RBX1.

It participates in protein modification; protein ubiquitination. Functionally, substrate-specific adapter of a BCR (BTB-CUL3-RBX1) E3 ubiquitin ligase complex involved in various processes, such as translation homeostasis and lipid synthesis. The BCR(KLHL25) ubiquitin ligase complex acts by mediating ubiquitination of hypophosphorylated EIF4EBP1 (4E-BP1): ubiquitination and subsequent degradation of hypophosphorylated EIF4EBP1 (4E-BP1) probably serves as a homeostatic mechanism to maintain translation and prevent eIF4E inhibition when eIF4E levels are low. The BCR(KLHL25) complex does not target EIF4EBP1 (4E-BP1) when it is hyperphosphorylated or associated with eIF4E. The BCR(KLHL25) complex also acts as a regulator of lipid synthesis by mediating ubiquitination and degradation of ACLY, thereby inhibiting lipid synthesis. BCR(KLHL25)-mediated degradation of ACLY promotes fatty acid oxidation and is required for differentiation of inducible regulatory T (iTreg) cells. This Mus musculus (Mouse) protein is Kelch-like protein 25.